A 135-amino-acid chain; its full sequence is Biglycan (135 aa).

LRR repeat units follow at residues 4–24 (KLNY…DLPE), 25–46 (TLNE…DLLR), 49–72 (KLYR…SFLP), 73–95 (TLRE…PDLK), and 96–117 (LLQV…DFCP). The N-linked (GlcNAc...) asparagine glycan is linked to asparagine 65. N-linked (GlcNAc...) asparagine glycosylation occurs at asparagine 106.

The protein belongs to the small leucine-rich proteoglycan (SLRP) family. SLRP class I subfamily. As to quaternary structure, homodimer. Forms a ternary complex with MFAP2 and ELN. Post-translationally, the two attached glycosaminoglycan chains can be either chondroitin sulfate or dermatan sulfate. As to expression, found in several connective tissues, especially in articular cartilages.

The protein localises to the secreted. The protein resides in the extracellular space. It is found in the extracellular matrix. May be involved in collagen fiber assembly. The polypeptide is Biglycan (BGN) (Oryctolagus cuniculus (Rabbit)).